We begin with the raw amino-acid sequence, 465 residues long: Gamma-aminobutyric acid receptor subunit gamma-1 (465 aa).

Residues 1–20 (MGSGKVFLFSPSLLWSQTRG) form the signal peptide. At 21 to 273 (VRLIFLLLTL…FDLSRRMGYF (253 aa)) the chain is on the extracellular side. Residues asparagine 50 and asparagine 127 are each glycosylated (N-linked (GlcNAc...) asparagine). Cysteine 188 and cysteine 202 form a disulfide bridge. N-linked (GlcNAc...) asparagine glycosylation occurs at asparagine 245. The helical transmembrane segment at 274-294 (TIQTYIPCILTVVLSWVSFWI) threads the bilayer. Over 295 to 300 (NKDAVP) the chain is Cytoplasmic. The chain crosses the membrane as a helical span at residues 301–320 (ARTSLGITTVLTMTTLSTIA). At 321–328 (RKSLPKVS) the chain is on the extracellular side. Residues 329–349 (YVTAMDLFVSVCFIFVFAALM) traverse the membrane as a helical segment. The Cytoplasmic segment spans residues 350-444 (EYGTLHYFTS…RIAKIDSYSR (95 aa)). The helical transmembrane segment at 445–465 (IFFPTAFALFNLVYWVGYLYL) threads the bilayer.

Belongs to the ligand-gated ion channel (TC 1.A.9) family. Gamma-aminobutyric acid receptor (TC 1.A.9.5) subfamily. GABRG1 sub-subfamily. Heteropentamer, formed by a combination of alpha (GABRA1-6), beta (GABRB1-3), gamma (GABRG1-3), delta (GABRD), epsilon (GABRE), rho (GABRR1-3), pi (GABRP) and theta (GABRQ) chains, each subunit exhibiting distinct physiological and pharmacological properties. In terms of processing, may be palmitoylated. As to expression, expressed in brain.

The protein resides in the postsynaptic cell membrane. It localises to the cell membrane. It catalyses the reaction chloride(in) = chloride(out). Functionally, gamma subunit of the heteropentameric ligand-gated chloride channel gated by gamma-aminobutyric acid (GABA), a major inhibitory neurotransmitter in the brain. GABA-gated chloride channels, also named GABA(A) receptors (GABAAR), consist of five subunits arranged around a central pore and contain GABA active binding site(s) located at the alpha and beta subunit interface(s). When activated by GABA, GABAARs selectively allow the flow of chloride anions across the cell membrane down their electrochemical gradient. Chloride influx into the postsynaptic neuron following GABAAR opening decreases the neuron ability to generate a new action potential, thereby reducing nerve transmission. The polypeptide is Gamma-aminobutyric acid receptor subunit gamma-1 (Rattus norvegicus (Rat)).